Here is a 346-residue protein sequence, read N- to C-terminus: Dihydroorotase (346 aa).

Residues histidine 14 and histidine 16 each coordinate Zn(2+). Residues 16–18 (HLR) and asparagine 42 contribute to the substrate site. 3 residues coordinate Zn(2+): lysine 100, histidine 137, and histidine 175. The residue at position 100 (lysine 100) is an N6-carboxylysine. Histidine 137 lines the substrate pocket. Leucine 220 lines the substrate pocket. Aspartate 248 contacts Zn(2+). Residue aspartate 248 is part of the active site. Positions 252 and 264 each coordinate substrate.

It belongs to the metallo-dependent hydrolases superfamily. DHOase family. Class II DHOase subfamily. In terms of assembly, homodimer. The cofactor is Zn(2+).

The catalysed reaction is (S)-dihydroorotate + H2O = N-carbamoyl-L-aspartate + H(+). The protein operates within pyrimidine metabolism; UMP biosynthesis via de novo pathway; (S)-dihydroorotate from bicarbonate: step 3/3. Catalyzes the reversible cyclization of carbamoyl aspartate to dihydroorotate. This Ruegeria pomeroyi (strain ATCC 700808 / DSM 15171 / DSS-3) (Silicibacter pomeroyi) protein is Dihydroorotase.